A 686-amino-acid chain; its full sequence is Epsin (686 aa).

An ENTH domain is found at 14 to 145 (DAVLNTPEIE…QDDQRIKEER (132 aa)). Disordered regions lie at residues 177 to 417 (YDSD…FNNN) and 463 to 571 (NSSM…TMRP). The segment covering 185–211 (NQRDSYGGNQRDSYGGNQRDSYGGNQR) has biased composition (polar residues). Positions 212–225 (ETTRRDSFNGRDEG) are enriched in basic and acidic residues. A compositionally biased stretch (polar residues) spans 237 to 256 (SYDSDPYSNTRAEYENYSNR). Composition is skewed to low complexity over residues 269–340 (SNNS…SGPS) and 383–417 (NNTN…FNNN). The segment covering 491–503 (FDQQSGDFSNKND) has biased composition (polar residues). Residues 504 to 521 (GQQKPKDTNDPWSKKDLF) show a composition bias toward basic and acidic residues. The span at 527-547 (GNQNPNQSPVNNTNNNNNGNT) shows a compositional bias: low complexity. The segment covering 558-567 (PITSAGSTIP) has biased composition (polar residues).

The protein belongs to the epsin family.

The protein localises to the membrane. Its subcellular location is the clathrin-coated pit. Binds to membranes enriched in phosphatidylinositol 4,5-bisphosphate (PtdIns(4,5)P2). This Dictyostelium discoideum (Social amoeba) protein is Epsin (epnA).